A 70-amino-acid chain; its full sequence is Large ribosomal subunit protein eL38 (70 aa).

The protein belongs to the eukaryotic ribosomal protein eL38 family.

This Ostertagia ostertagi (Brown stomach worm) protein is Large ribosomal subunit protein eL38 (rpl-38).